Here is a 1015-residue protein sequence, read N- to C-terminus: Cytosolic carboxypeptidase 1 (1015 aa).

A disordered region spans residues 384–462; that stretch reads LPTATPSTPG…GALPKTTRLN (79 aa). The segment covering 416–451 has biased composition (acidic residues); it reads EDGMDEEDEAFVRDDDDEGKDDRGSDDDDGKDDDEI. One can recognise a Peptidase M14 domain in the interval 727 to 1013; sequence YPYTYSFLNS…DLLHSFLEMT (287 aa). Residues histidine 792, glutamate 795, and histidine 891 each coordinate Zn(2+). The active-site Proton donor/acceptor is the glutamate 977.

The protein belongs to the peptidase M14 family. Requires Zn(2+) as cofactor. In terms of tissue distribution, in hermaphrodites and males, expressed in amphid and IL2 ciliated sensory neurons. In males, expressed in CEM head neurons, RnB and HOB tail neurons, and in gubernacular erector and retractor muscles.

It is found in the perikaryon. Its subcellular location is the cell projection. The protein resides in the cilium. The protein localises to the dendrite. Its function is as follows. Catalyzes the deglutamylation of polyglutamate side chains generated by post-translational polyglutamylation of proteins such as tubulins. Via the deglutamylation of tubulin, regulates the localization and velocity of kinesin motors and the structural integrity of microtubules in sensory cilia. In male CEM sensory neurons, regulates the cilia release of bioactive extracellular vesicles. Also regulates microtubule dynamics in uterine muscle cells. The chain is Cytosolic carboxypeptidase 1 from Caenorhabditis elegans.